Consider the following 265-residue polypeptide: ClpXP adapter protein SpxH (265 aa).

The protein belongs to the SpxH family. In terms of assembly, interacts with Spx.

Its subcellular location is the cytoplasm. Functionally, adapter protein required for efficient degradation of Spx by ClpXP under non-stress conditions. Interaction with Spx stabilizes Spx and exposes the C-terminus of Spx for recognition and proteolysis by ClpXP. The polypeptide is ClpXP adapter protein SpxH (Staphylococcus epidermidis (strain ATCC 35984 / DSM 28319 / BCRC 17069 / CCUG 31568 / BM 3577 / RP62A)).